A 177-amino-acid polypeptide reads, in one-letter code: uncharacterized protein (177 aa).

Composition is skewed to low complexity over residues 78-93 (NNNNNNNNTINNNTNN) and 120-130 (SDVNSNNNNGN). Positions 78-146 (NNNNNNNNTI…NKKLKKDGTN (69 aa)) are disordered. Basic residues predominate over residues 131–146 (HQKKKINKKLKKDGTN).

This is an uncharacterized protein from Dictyostelium discoideum (Social amoeba).